A 304-amino-acid chain; its full sequence is Polyisoprenyl-teichoic acid--peptidoglycan teichoic acid transferase TagU (304 aa).

Residues 1–3 (MKK) lie on the Cytoplasmic side of the membrane. A helical; Signal-anchor for type II membrane protein transmembrane segment spans residues 4–24 (ALIAIGLILGTITVAIIGYGI). Residues 25-304 (YLYSSIQNTA…GELKSHLELS (280 aa)) lie on the Extracellular side of the membrane.

This sequence belongs to the LytR/CpsA/Psr (LCP) family.

It localises to the cell membrane. The protein operates within cell wall biogenesis. Functionally, may catalyze the final step in cell wall teichoic acid biosynthesis, the transfer of the anionic cell wall polymers (APs) from their lipid-linked precursor to the cell wall peptidoglycan (PG). This is Polyisoprenyl-teichoic acid--peptidoglycan teichoic acid transferase TagU from Halalkalibacterium halodurans (strain ATCC BAA-125 / DSM 18197 / FERM 7344 / JCM 9153 / C-125) (Bacillus halodurans).